The following is a 298-amino-acid chain: Probable endonuclease 4 (298 aa).

Residues H69, H111, E146, D180, H183, H215, D228, H230, and E260 each contribute to the Zn(2+) site.

The protein belongs to the AP endonuclease 2 family. The cofactor is Zn(2+).

It carries out the reaction Endonucleolytic cleavage to 5'-phosphooligonucleotide end-products.. In terms of biological role, endonuclease IV plays a role in DNA repair. It cleaves phosphodiester bonds at apurinic or apyrimidinic (AP) sites, generating a 3'-hydroxyl group and a 5'-terminal sugar phosphate. In Bacillus cytotoxicus (strain DSM 22905 / CIP 110041 / 391-98 / NVH 391-98), this protein is Probable endonuclease 4.